Reading from the N-terminus, the 307-residue chain is 4-hydroxy-tetrahydrodipicolinate synthase (307 aa).

Ser57 is a binding site for pyruvate. Residue Tyr145 is the Proton donor/acceptor of the active site. Lys173 serves as the catalytic Schiff-base intermediate with substrate. Residue Ile219 coordinates pyruvate.

It belongs to the DapA family. Homotetramer; dimer of dimers.

Its subcellular location is the cytoplasm. It catalyses the reaction L-aspartate 4-semialdehyde + pyruvate = (2S,4S)-4-hydroxy-2,3,4,5-tetrahydrodipicolinate + H2O + H(+). It participates in amino-acid biosynthesis; L-lysine biosynthesis via DAP pathway; (S)-tetrahydrodipicolinate from L-aspartate: step 3/4. Its function is as follows. Catalyzes the condensation of (S)-aspartate-beta-semialdehyde [(S)-ASA] and pyruvate to 4-hydroxy-tetrahydrodipicolinate (HTPA). The sequence is that of 4-hydroxy-tetrahydrodipicolinate synthase from Polynucleobacter asymbioticus (strain DSM 18221 / CIP 109841 / QLW-P1DMWA-1) (Polynucleobacter necessarius subsp. asymbioticus).